The primary structure comprises 547 residues: Glucose-6-phosphate isomerase 2 (547 aa).

The active-site Proton donor is Glu-351. Catalysis depends on residues His-382 and Lys-508.

Belongs to the GPI family.

It localises to the cytoplasm. The catalysed reaction is alpha-D-glucose 6-phosphate = beta-D-fructose 6-phosphate. Its pathway is carbohydrate biosynthesis; gluconeogenesis. It participates in carbohydrate degradation; glycolysis; D-glyceraldehyde 3-phosphate and glycerone phosphate from D-glucose: step 2/4. Its function is as follows. Catalyzes the reversible isomerization of glucose-6-phosphate to fructose-6-phosphate. The polypeptide is Glucose-6-phosphate isomerase 2 (Neisseria gonorrhoeae (strain ATCC 700825 / FA 1090)).